The sequence spans 354 residues: Ribosomal RNA large subunit methyltransferase K (354 aa).

It belongs to the methyltransferase superfamily.

It localises to the cytoplasm. The catalysed reaction is guanosine(2069) in 23S rRNA + S-adenosyl-L-methionine = N(2)-methylguanosine(2069) in 23S rRNA + S-adenosyl-L-homocysteine + H(+). Its function is as follows. Specifically methylates the guanine in position 2069 (m7G2069) of 23S rRNA. The sequence is that of Ribosomal RNA large subunit methyltransferase K (rlmK) from Neisseria meningitidis serogroup B (strain ATCC BAA-335 / MC58).